A 62-amino-acid chain; its full sequence is Snaclec aspercetin subunit beta (62 aa).

Cys2 and Cys13 are oxidised to a cystine. The C-type lectin domain maps to 9–62 (YEGHCYRVFKPPKDWADAERFCSQQAKGGHLVSIERFGREDFVSNLITKNLQRG).

It belongs to the snaclec family. In terms of assembly, heterodimer; disulfide-linked. Expressed by the venom gland.

It localises to the secreted. Snaclec that binds to von Willebrand factor (VWF) and induces its interaction with GPIbalpha (GP1BA) (via the vWF A1 domain), resulting in platelet aggregation. Intramuscular and intravenous injections in mice induce a dose-dependent drop in platelet count (thrombocytopenia). Pretreatment by intravenous injection by this protein in mice potentiates the hemorrhagic lesion in the skin provoked by the metalloproteinase BaP1 intradermally injected. This result is not observed when both BaP1 and this protein are injected simultaneously. This chain is Snaclec aspercetin subunit beta, found in Bothrops asper (Terciopelo).